Here is a 96-residue protein sequence, read N- to C-terminus: Cytoplasmic envelopment protein 3 (96 aa).

Gly2 carries the N-myristoyl glycine; by host lipid modification. The Di-leucine-like internalization motif signature appears at 18 to 19 (LI). The tract at residues 37 to 43 (DIESEEE) is asp/Glu-rich (acidic). Ser40 bears the Phosphoserine mark. Positions 57–96 (RAPGRQRLRSSDPPSRHTHRRTPGGACPATQFPPPMSDSE) are disordered. Over residues 87-96 (QFPPPMSDSE) the composition is skewed to pro residues.

It belongs to the herpesviridae cytoplasmic envelopment protein 3 family. As to quaternary structure, interacts with cytoplasmic envelopment protein 2; this interaction is essential for the proper localization of each protein to the assembly complex and thus for the production of infectious virus. Interacts with gE (via C-terminus). Interacts with gD (via C-terminus). Interacts with UL56. Post-translationally, myristoylation and palmitoylation (probably on one or more of the nearby cysteines at the N-terminus) enable membrane-binding and Golgi apparatus-specific targeting and are essential for efficient packaging. Phosphorylated. Phosphorylation does not seem to be required for recycling to the host Golgi apparatus. Packaging is selective for underphosphorylated forms.

It localises to the virion tegument. The protein resides in the virion membrane. It is found in the host cell membrane. The protein localises to the host Golgi apparatus membrane. Plays an important role in the cytoplasmic envelopment of tegument proteins and capsids during the assembly and egress processes. Also participates in viral entry at the fusion step probably by regulating the core fusion machinery. This chain is Cytoplasmic envelopment protein 3, found in Human herpesvirus 1 (strain KOS) (HHV-1).